The sequence spans 137 residues: Large ribosomal subunit protein uL16 (137 aa).

Belongs to the universal ribosomal protein uL16 family. Part of the 50S ribosomal subunit.

Its function is as follows. Binds 23S rRNA and is also seen to make contacts with the A and possibly P site tRNAs. The sequence is that of Large ribosomal subunit protein uL16 from Nitratidesulfovibrio vulgaris (strain DSM 19637 / Miyazaki F) (Desulfovibrio vulgaris).